We begin with the raw amino-acid sequence, 218 residues long: uncharacterized protein (218 aa).

2 stretches are compositionally biased toward polar residues: residues 1–21 (MSSQ…SSEF) and 68–102 (LNTS…SSDI). Disordered regions lie at residues 1–39 (MSSQ…RHAS), 63–116 (EKRL…STSG), and 170–205 (GAKR…GTPQ). The segment covering 183 to 195 (KRQEKQSPLESRH) has biased composition (basic and acidic residues).

This is an uncharacterized protein from Caenorhabditis elegans.